A 429-amino-acid polypeptide reads, in one-letter code: MSAELSQSPSSSPLFSLSGADIDRAAKRIAPVVTPTPLQPSDRLSAITGATVYLKREDLQTVRSYKLRGAYNLLVQLSDEELAAGVVCSSAGNHAQGFAYACRCLGVHGRVYVPAKTPKQKRDRIRYHGGEFIDLIVGGSTYDLAAAAALEDVERTGATLVPPFDDLRTIAGQGTIAVEVLGQLEDEPDLVVVPVGGGGCIAGITTYLAERTTNTAVLGVEPAGAAAMMAALAAGEPVTLDHVDQFVDGAAVNRAGTLTYAALAAAGDMVSLTTVDEGAVCTAMLDLYQNEGIIAEPAGALSVAGLLEADIEPGSTVVCLISGGNNDVSRYGEVLERSLVHLGLKHYFLVDFPQEPGALRRFLDDVLGPNDDITLFEYVKRNNRETGEALVGIELGSAADLDGLLARMRATDIHVEALEPGSPAYRYLL.

Lysine 66 is modified (N6-(pyridoxal phosphate)lysine). Pyridoxal 5'-phosphate-binding positions include asparagine 93, 196 to 200 (GGGGC), and serine 322. Positions 346–420 (HYFLVDFPQE…TDIHVEALEP (75 aa)) constitute an ACT-like domain.

This sequence belongs to the serine/threonine dehydratase family. In terms of assembly, homotetramer. The cofactor is pyridoxal 5'-phosphate.

It carries out the reaction L-threonine = 2-oxobutanoate + NH4(+). It participates in amino-acid biosynthesis; L-isoleucine biosynthesis; 2-oxobutanoate from L-threonine: step 1/1. Its function is as follows. Catalyzes the anaerobic formation of alpha-ketobutyrate and ammonia from threonine in a two-step reaction. The first step involved a dehydration of threonine and a production of enamine intermediates (aminocrotonate), which tautomerizes to its imine form (iminobutyrate). Both intermediates are unstable and short-lived. The second step is the nonenzymatic hydrolysis of the enamine/imine intermediates to form 2-ketobutyrate and free ammonia. In the low water environment of the cell, the second step is accelerated by RidA. This is L-threonine dehydratase biosynthetic IlvA (ilvA) from Mycobacterium bovis (strain ATCC BAA-935 / AF2122/97).